Consider the following 348-residue polypeptide: UPF0283 membrane protein PMI1371 (348 aa).

Helical transmembrane passes span 69–89 and 99–119; these read LITV…GQWI and IALG…GSVI.

This sequence belongs to the UPF0283 family.

The protein resides in the cell inner membrane. This chain is UPF0283 membrane protein PMI1371, found in Proteus mirabilis (strain HI4320).